Here is a 282-residue protein sequence, read N- to C-terminus: Phenylethanolamine N-methyltransferase (282 aa).

Ser7 is subject to Phosphoserine. Residues Tyr35, Tyr40, 79–80 (GS), Tyr85, Asp101, Asn106, 158–159 (DV), and Ala181 each bind S-adenosyl-L-methionine. Octopamine-binding residues include Glu219 and Asp267.

It catalyses the reaction phenylethanolamine + S-adenosyl-L-methionine = N-methylphenylethanolamine + S-adenosyl-L-homocysteine + H(+). It carries out the reaction (R)-noradrenaline + S-adenosyl-L-methionine = (R)-adrenaline + S-adenosyl-L-homocysteine + H(+). The catalysed reaction is (R)-normetanephrine + S-adenosyl-L-methionine = (R)-metanephrine + S-adenosyl-L-homocysteine + H(+). The enzyme catalyses (R)-octopamine + S-adenosyl-L-methionine = (R)-synephrine + S-adenosyl-L-homocysteine + H(+). The protein operates within catecholamine biosynthesis; (R)-adrenaline biosynthesis; (R)-adrenaline from (R)-noradrenaline: step 1/1. Inhibited by methyl methanethiosulfonate, phenylglyoxal, tetranitromethane and diethyl pyrocarbonate. Inhibited by 4-oxo-1,4-dihydro-quinoline-3,7-dicarboxylic acid, 4-(benzo[d][1,3]dioxol-5-ylamino)-4-oxobutanoic acid and 1,4-diaminonaphthalene-2,6-disulfonic acid. Functionally, catalyzes the transmethylation of nonepinephrine (noradrenaline) to form epinephrine (adrenaline), using S-adenosyl-L-methionine as the methyl donor. Other substrates include phenylethanolamine and octopamine. Also methylates normetanephrine. This chain is Phenylethanolamine N-methyltransferase (PNMT), found in Homo sapiens (Human).